A 275-amino-acid polypeptide reads, in one-letter code: Ribosomal RNA small subunit methyltransferase A (275 aa).

Residues N28, L30, G55, E77, D103, and N123 each coordinate S-adenosyl-L-methionine.

This sequence belongs to the class I-like SAM-binding methyltransferase superfamily. rRNA adenine N(6)-methyltransferase family. RsmA subfamily.

Its subcellular location is the cytoplasm. The catalysed reaction is adenosine(1518)/adenosine(1519) in 16S rRNA + 4 S-adenosyl-L-methionine = N(6)-dimethyladenosine(1518)/N(6)-dimethyladenosine(1519) in 16S rRNA + 4 S-adenosyl-L-homocysteine + 4 H(+). In terms of biological role, specifically dimethylates two adjacent adenosines (A1518 and A1519) in the loop of a conserved hairpin near the 3'-end of 16S rRNA in the 30S particle. May play a critical role in biogenesis of 30S subunits. This is Ribosomal RNA small subunit methyltransferase A from Rhizobium etli (strain ATCC 51251 / DSM 11541 / JCM 21823 / NBRC 15573 / CFN 42).